Consider the following 72-residue polypeptide: Translation initiation factor IF-1 2 (72 aa).

One can recognise an S1-like domain in the interval M1–K72.

The protein belongs to the IF-1 family. In terms of assembly, component of the 30S ribosomal translation pre-initiation complex which assembles on the 30S ribosome in the order IF-2 and IF-3, IF-1 and N-formylmethionyl-tRNA(fMet); mRNA recruitment can occur at any time during PIC assembly.

It is found in the cytoplasm. Its function is as follows. One of the essential components for the initiation of protein synthesis. Stabilizes the binding of IF-2 and IF-3 on the 30S subunit to which N-formylmethionyl-tRNA(fMet) subsequently binds. Helps modulate mRNA selection, yielding the 30S pre-initiation complex (PIC). Upon addition of the 50S ribosomal subunit IF-1, IF-2 and IF-3 are released leaving the mature 70S translation initiation complex. The chain is Translation initiation factor IF-1 2 from Cupriavidus metallidurans (strain ATCC 43123 / DSM 2839 / NBRC 102507 / CH34) (Ralstonia metallidurans).